The sequence spans 1132 residues: MQRRGAGLGWPRQQQQQPPPLAVGPRAAAMVPSGGVPQGLGGRSACALLLLCYLNVVPSLGRQTSLTTSVIPKAEQSVAYKDFIYFTVFEGNVRNVSEVSVEYLCSQPCVVNLEAVVSSEFRSSIPVYKKRWKNEKHLHTSRTQIVHVKFPSIMVYRDDYFIRHSISVSAVIVRAWITHKYSGRDWNVKWEENLLHAVAKNYTLLQTIPPFERPFKDHQVCLEWNMGYIWNLRANRIPQCPLENDVVALLGFPYASSGENTGIVKKFPRFRNRELEATRRQRMDYPVFTVSLWLYLLHYCKANLCGILYFVDSNEMYGTPSVFLTEEGYLHIQMHLVKGEDLAVKTKFIIPLKEWFRLDISFNGGQIVVTTSIGQDLKSYHNQTISFREDFHYNDTAGYFIIGGSRYVAGIEGFFGPLKYYRLRSLHPAQIFNPLLEKQLAEQIKLYYERCAEVQEIVSVYASAAKHGGERQEACHLHNSYLDLQRRYGRPSMCRAFPWEKELKDKHPSLFQALLEMDLLTVPRNQNESVSEIGGKIFEKAVKRLSSIDGLHQISSIVPFLTDSSCCGYHKASYYLAVFYETGLNVPRDQLQGMLYSLVGGQGSERLSSMNLGYKHYQGIDNYPLDWELSYAYYSNIATKTPLDQHTLQGDQAYVETIRLKDDEILKVQTKEDGDVFMWLKHEATRGNAAAQQRLAQMLFWGQQGVAKNPEAAIEWYAKGALETEDPALIYDYAIVLFKGQGVKKNRRLALELMKKAASKGLHQAVNGLGWYYHKFKKNYAKAAKYWLKAEEMGNPDASYNLGVLHLDGIFPGVPGRNQTLAGEYFHKAAQGGHMEGTLWCSLYYITGNLETFPRDPEKAVVWAKHVAEKNGYLGHVIRKGLNAYLEGSWHEALLYYVLAAETGIEVSQTNLAHICEERPDLARRYLGVNCVWRYYNFSVFQIDAPSFAYLKMGDLYYYGHQNQSQDLELSVQMYAQAALDGDSQGFFNLALLIEEGTIIPHHILDFLEIDSTLHSNNISILQELYERCWSHSNEESFSPCSLAWLYLHLRLLWGAILHSALIYFLGTFLLSILIAWTVQYFQSVSASDPPPRPSQASPDTATSTASPAVTPAADASDQDQPTVTNNPEPRG.

Residues 1–24 form a disordered region; it reads MQRRGAGLGWPRQQQQQPPPLAVG. N-linked (GlcNAc...) asparagine glycosylation is found at N201, N382, and N527. Sel1-like repeat units lie at residues 575 to 609, 611 to 647, 694 to 730, 732 to 767, 768 to 800, 801 to 839, and 840 to 877; these read YLAV…RLSS, NLGY…DQHT, RLAQ…PALI, DYAI…QAVN, GLGW…DASY, NLGV…EGTL, and WCSL…LGHV. S608 carries the post-translational modification Phosphoserine. N-linked (GlcNAc...) asparagine glycosylation is present at N937. The stretch at 952–988 is one Sel1-like 8 repeat; it reads KMGDLYYYGHQNQSQDLELSVQMYAQAALDGDSQGFF. The helical transmembrane segment at 1057–1077 threads the bilayer; sequence ILHSALIYFLGTFLLSILIAW. A disordered region spans residues 1087–1132; it reads ASDPPPRPSQASPDTATSTASPAVTPAADASDQDQPTVTNNPEPRG. A compositionally biased stretch (low complexity) spans 1097–1116; sequence ASPDTATSTASPAVTPAADA. The span at 1119–1132 shows a compositional bias: polar residues; that stretch reads QDQPTVTNNPEPRG.

It localises to the membrane. This is Protein sel-1 homolog 3 (SEL1L3) from Homo sapiens (Human).